The following is a 758-amino-acid chain: 5-methyltetrahydropteroyltriglutamate--homocysteine methyltransferase (758 aa).

5-methyltetrahydropteroyltri-L-glutamate is bound by residues 17–20 (RELK) and lysine 117. Residues 434–436 (IGS) and glutamate 487 each bind L-homocysteine. L-methionine contacts are provided by residues 434-436 (IGS) and glutamate 487. 5-methyltetrahydropteroyltri-L-glutamate-binding positions include 518–519 (RC) and tryptophan 564. Aspartate 602 is an L-homocysteine binding site. Residue aspartate 602 coordinates L-methionine. Glutamate 608 contacts 5-methyltetrahydropteroyltri-L-glutamate. Zn(2+)-binding residues include histidine 644, cysteine 646, and glutamate 668. Catalysis depends on histidine 697, which acts as the Proton donor. Cysteine 729 is a binding site for Zn(2+).

This sequence belongs to the vitamin-B12 independent methionine synthase family. Zn(2+) is required as a cofactor.

It catalyses the reaction 5-methyltetrahydropteroyltri-L-glutamate + L-homocysteine = tetrahydropteroyltri-L-glutamate + L-methionine. The protein operates within amino-acid biosynthesis; L-methionine biosynthesis via de novo pathway; L-methionine from L-homocysteine (MetE route): step 1/1. Catalyzes the transfer of a methyl group from 5-methyltetrahydrofolate to homocysteine resulting in methionine formation. The protein is 5-methyltetrahydropteroyltriglutamate--homocysteine methyltransferase of Yersinia pseudotuberculosis serotype I (strain IP32953).